The following is an 85-amino-acid chain: Large ribosomal subunit protein bL27 (85 aa).

A disordered region spans residues 1 to 24; it reads MAHKKGQGSSRNGRDSNAQRRGVK.

This sequence belongs to the bacterial ribosomal protein bL27 family.

This Syntrophus aciditrophicus (strain SB) protein is Large ribosomal subunit protein bL27.